Consider the following 164-residue polypeptide: Sperm axonemal maintenance protein CFAP97D1 (164 aa).

Positions 61-88 (LSKIQGEQKRIDKIEYENRQLCQKIANA) form a coiled coil.

This sequence belongs to the CFAP97 family. As to expression, expressed exclusively in testis.

Its function is as follows. Required for male fertility through its role in axonemal doublet stabilization which is essential for sperm motility and fertilization. The protein is Sperm axonemal maintenance protein CFAP97D1 (Cfap97d1) of Mus musculus (Mouse).